Here is a 142-residue protein sequence, read N- to C-terminus: Natriuretic peptides A (142 aa).

A signal peptide spans Met-1 to Ala-23. Positions Asp-24–Arg-112 are excised as a propeptide. Positions Asp-47–Ser-123 are disordered. The segment covering Trp-77 to Gln-94 has biased composition (basic and acidic residues). An intrachain disulfide couples Cys-120 to Cys-136.

Belongs to the natriuretic peptide family. Post-translationally, cleaved upon secretion to produce the functional hormone. Expressed in heart atrium and to a lower extent in heart ventricle, but not in brain.

It is found in the secreted. Functionally, hormone playing a key role in cardiovascular homeostasis through regulation of natriuresis, diuresis, and vasodilation. Has a cGMP-stimulating activity. The sequence is that of Natriuretic peptides A (nppa) from Acipenser transmontanus (White sturgeon).